The sequence spans 136 residues: Lipoprotein YghG (136 aa).

A signal peptide spans 1 to 24; that stretch reads MSIKQMPGRVLISLLLSVTGLLSG. C25 carries the N-palmitoyl cysteine lipid modification. C25 carries the S-diacylglycerol cysteine lipid modification.

The protein belongs to the GspS/AspS pilotin family.

It localises to the cell outer membrane. In terms of biological role, involved in a type II secretion system (T2SS, formerly general secretion pathway, GSP) for the export of folded proteins across the outer membrane. In a functional T2SS this subunit helps assemble the outer membrane channel. In Escherichia coli (strain K12), this protein is Lipoprotein YghG (yghG).